An 805-amino-acid chain; its full sequence is Leucine--tRNA ligase (805 aa).

The 'HIGH' region signature appears at 40-51 (PYPSGSGLHVGH). The 'KMSKS' region motif lies at 576–580 (KMSKS). Position 579 (Lys-579) interacts with ATP.

This sequence belongs to the class-I aminoacyl-tRNA synthetase family.

Its subcellular location is the cytoplasm. The enzyme catalyses tRNA(Leu) + L-leucine + ATP = L-leucyl-tRNA(Leu) + AMP + diphosphate. The polypeptide is Leucine--tRNA ligase (Chloroherpeton thalassium (strain ATCC 35110 / GB-78)).